We begin with the raw amino-acid sequence, 544 residues long: Baeyer-Villiger monooxygenase (544 aa).

The FAD site is built by phenylalanine 27, glutamate 47, tryptophan 56, aspartate 67, tyrosine 73, and valine 119.

The protein belongs to the FAD-binding monooxygenase family. It depends on FAD as a cofactor.

Catalyzes a Baeyer-Villiger oxidation reaction, i.e. the insertion of an oxygen atom into a carbon-carbon bond adjacent to a carbonyl, which converts ketones to esters or lactones using NADPH as an electron donor. Besides cycloalkanones, can use cyclic alpha,beta-unsaturated ketones as substrates, leading to enol-lactones. Can also act on methylated cycloalkanones and methylated cycloalkenones with high enantioselectivity in some cases. This chain is Baeyer-Villiger monooxygenase, found in Parvibaculum lavamentivorans (strain DS-1 / DSM 13023 / NCIMB 13966).